The following is a 91-amino-acid chain: Preprofallaxidin-2 (91 aa).

A signal peptide spans Met-1–Cys-22. A propeptide spanning residues Glu-23–Arg-49 is cleaved from the precursor. A disordered region spans residues Lys-24–Arg-49. Residues Gly-31–His-41 show a composition bias toward acidic residues. Leu-65 carries the leucine amide modification. Positions Ser-69–Arg-73 are excised as a propeptide. Position 89 is a leucine amide (Leu-89).

Belongs to the frog skin active peptide (FSAP) family. Dermaseptin subfamily. As to expression, expressed by the skin glands.

The protein resides in the secreted. Its function is as follows. Fallaxidin-3.1 shows antibacterial activity against the Gram-positive bacteria E.faecalis (MIC=100 uM) and L.lactis (MIC=100 uM). No antibacterial activity against the Gram-positive bacteria B.cereus, L.innocua, M.luteus, S.epidermidis, S.uberis and S.aureus, or the Gram-negative bacteria E.cloacae and E.coli. In terms of biological role, fallaxidin-3.2 shows antibacterial activity against the Gram-positive bacteria E.faecalis (MIC=100 uM) and L.lactis (MIC=500 uM). No antibacterial activity against the Gram-positive bacteria B.cereus, L.innocua, M.luteus, S.epidermidis, S.uberis and S.aureus, or the Gram-negative bacteria E.cloacae and E.coli. The polypeptide is Preprofallaxidin-2 (Litoria fallax (Eastern dwarf tree frog)).